A 270-amino-acid chain; its full sequence is Probable 6-oxopurine nucleoside phosphorylase (270 aa).

Phosphate-binding positions include S10 and R48–H49. M191 is a binding site for substrate. T192 contacts phosphate. N215–A217 is a binding site for substrate.

It belongs to the PNP/MTAP phosphorylase family. MTAP subfamily. In terms of assembly, homohexamer. Dimer of a homotrimer.

It catalyses the reaction a purine D-ribonucleoside + phosphate = a purine nucleobase + alpha-D-ribose 1-phosphate. Its pathway is purine metabolism; purine nucleoside salvage. Its function is as follows. Purine nucleoside phosphorylase which is highly specific for 6-oxopurine nucleosides. Cleaves guanosine or inosine to respective bases and sugar-1-phosphate molecules. Involved in purine salvage. This is Probable 6-oxopurine nucleoside phosphorylase from Korarchaeum cryptofilum (strain OPF8).